Consider the following 79-residue polypeptide: Conotoxin ArMKLT2-031 (79 aa).

The first 22 residues, 1-22 (MKLTCVLIIAVLFLTACQLTTG), serve as a signal peptide directing secretion. Positions 23–46 (ETYSRGEQKDHALRSTDKNSKLTR) are excised as a propeptide. Gln-47 is modified (pyrrolidone carboxylic acid). Disulfide bonds link Cys-48/Cys-62, Cys-55/Cys-66, and Cys-61/Cys-73.

This sequence belongs to the conotoxin O1 superfamily. As to expression, expressed by the venom duct.

It localises to the secreted. The polypeptide is Conotoxin ArMKLT2-031 (Conus arenatus (Sand-dusted cone)).